Here is a 235-residue protein sequence, read N- to C-terminus: Phosphoribosylaminoimidazole-succinocarboxamide synthase (235 aa).

This sequence belongs to the SAICAR synthetase family.

The catalysed reaction is 5-amino-1-(5-phospho-D-ribosyl)imidazole-4-carboxylate + L-aspartate + ATP = (2S)-2-[5-amino-1-(5-phospho-beta-D-ribosyl)imidazole-4-carboxamido]succinate + ADP + phosphate + 2 H(+). It participates in purine metabolism; IMP biosynthesis via de novo pathway; 5-amino-1-(5-phospho-D-ribosyl)imidazole-4-carboxamide from 5-amino-1-(5-phospho-D-ribosyl)imidazole-4-carboxylate: step 1/2. The chain is Phosphoribosylaminoimidazole-succinocarboxamide synthase from Clostridium acetobutylicum (strain ATCC 824 / DSM 792 / JCM 1419 / IAM 19013 / LMG 5710 / NBRC 13948 / NRRL B-527 / VKM B-1787 / 2291 / W).